The primary structure comprises 371 residues: Queuine tRNA-ribosyltransferase (371 aa).

Aspartate 90 functions as the Proton acceptor in the catalytic mechanism. Residues 90 to 94 (DSGGF), aspartate 144, glutamine 188, and glycine 215 contribute to the substrate site. The segment at 246–252 (GVGTPED) is RNA binding. The active-site Nucleophile is aspartate 265. Positions 270 to 274 (TRNAR) are RNA binding; important for wobble base 34 recognition. 4 residues coordinate Zn(2+): cysteine 303, cysteine 305, cysteine 308, and histidine 334.

The protein belongs to the queuine tRNA-ribosyltransferase family. In terms of assembly, homodimer. Within each dimer, one monomer is responsible for RNA recognition and catalysis, while the other monomer binds to the replacement base PreQ1. The cofactor is Zn(2+).

The enzyme catalyses 7-aminomethyl-7-carbaguanine + guanosine(34) in tRNA = 7-aminomethyl-7-carbaguanosine(34) in tRNA + guanine. It functions in the pathway tRNA modification; tRNA-queuosine biosynthesis. Functionally, catalyzes the base-exchange of a guanine (G) residue with the queuine precursor 7-aminomethyl-7-deazaguanine (PreQ1) at position 34 (anticodon wobble position) in tRNAs with GU(N) anticodons (tRNA-Asp, -Asn, -His and -Tyr). Catalysis occurs through a double-displacement mechanism. The nucleophile active site attacks the C1' of nucleotide 34 to detach the guanine base from the RNA, forming a covalent enzyme-RNA intermediate. The proton acceptor active site deprotonates the incoming PreQ1, allowing a nucleophilic attack on the C1' of the ribose to form the product. After dissociation, two additional enzymatic reactions on the tRNA convert PreQ1 to queuine (Q), resulting in the hypermodified nucleoside queuosine (7-(((4,5-cis-dihydroxy-2-cyclopenten-1-yl)amino)methyl)-7-deazaguanosine). The protein is Queuine tRNA-ribosyltransferase of Neisseria gonorrhoeae (strain ATCC 700825 / FA 1090).